Here is a 619-residue protein sequence, read N- to C-terminus: DNA mismatch repair protein MutL (619 aa).

Over residues 364-375 (EPASAREPAAPR) the composition is skewed to low complexity. Residues 364–399 (EPASAREPAAPRYSTSSGATGGRQPAASWPHAQPGY) form a disordered region.

This sequence belongs to the DNA mismatch repair MutL/HexB family.

In terms of biological role, this protein is involved in the repair of mismatches in DNA. It is required for dam-dependent methyl-directed DNA mismatch repair. May act as a 'molecular matchmaker', a protein that promotes the formation of a stable complex between two or more DNA-binding proteins in an ATP-dependent manner without itself being part of a final effector complex. This Citrobacter koseri (strain ATCC BAA-895 / CDC 4225-83 / SGSC4696) protein is DNA mismatch repair protein MutL.